Here is a 346-residue protein sequence, read N- to C-terminus: tRNA N6-adenosine threonylcarbamoyltransferase (346 aa).

2 residues coordinate Fe cation: His-111 and His-115. Residues 134 to 138 (LVSGG), Asp-167, Gly-180, and Asn-279 each bind substrate. Asp-307 serves as a coordination point for Fe cation.

This sequence belongs to the KAE1 / TsaD family. Fe(2+) is required as a cofactor.

The protein resides in the cytoplasm. It carries out the reaction L-threonylcarbamoyladenylate + adenosine(37) in tRNA = N(6)-L-threonylcarbamoyladenosine(37) in tRNA + AMP + H(+). In terms of biological role, required for the formation of a threonylcarbamoyl group on adenosine at position 37 (t(6)A37) in tRNAs that read codons beginning with adenine. Is involved in the transfer of the threonylcarbamoyl moiety of threonylcarbamoyl-AMP (TC-AMP) to the N6 group of A37, together with TsaE and TsaB. TsaD likely plays a direct catalytic role in this reaction. This is tRNA N6-adenosine threonylcarbamoyltransferase from Burkholderia multivorans (strain ATCC 17616 / 249).